A 345-amino-acid chain; its full sequence is Holliday junction branch migration complex subunit RuvB (345 aa).

The interval 1-183 (MTTQRLVSAA…FGIVHRLEFY (183 aa)) is large ATPase domain (RuvB-L). Residues isoleucine 22, arginine 23, glycine 64, lysine 67, threonine 68, threonine 69, 130–132 (EDY), arginine 173, tyrosine 183, and arginine 220 each bind ATP. Position 68 (threonine 68) interacts with Mg(2+). Positions 184–254 (SVEELSRIVA…VAGKALEMLD (71 aa)) are small ATPAse domain (RuvB-S). The head domain (RuvB-H) stretch occupies residues 257 to 345 (PNGFDQSDRR…NVNEELFGDE (89 aa)). 3 residues coordinate DNA: arginine 293, arginine 312, and arginine 317.

It belongs to the RuvB family. Homohexamer. Forms an RuvA(8)-RuvB(12)-Holliday junction (HJ) complex. HJ DNA is sandwiched between 2 RuvA tetramers; dsDNA enters through RuvA and exits via RuvB. An RuvB hexamer assembles on each DNA strand where it exits the tetramer. Each RuvB hexamer is contacted by two RuvA subunits (via domain III) on 2 adjacent RuvB subunits; this complex drives branch migration. In the full resolvosome a probable DNA-RuvA(4)-RuvB(12)-RuvC(2) complex forms which resolves the HJ.

The protein resides in the cytoplasm. The catalysed reaction is ATP + H2O = ADP + phosphate + H(+). The RuvA-RuvB-RuvC complex processes Holliday junction (HJ) DNA during genetic recombination and DNA repair, while the RuvA-RuvB complex plays an important role in the rescue of blocked DNA replication forks via replication fork reversal (RFR). RuvA specifically binds to HJ cruciform DNA, conferring on it an open structure. The RuvB hexamer acts as an ATP-dependent pump, pulling dsDNA into and through the RuvAB complex. RuvB forms 2 homohexamers on either side of HJ DNA bound by 1 or 2 RuvA tetramers; 4 subunits per hexamer contact DNA at a time. Coordinated motions by a converter formed by DNA-disengaged RuvB subunits stimulates ATP hydrolysis and nucleotide exchange. Immobilization of the converter enables RuvB to convert the ATP-contained energy into a lever motion, pulling 2 nucleotides of DNA out of the RuvA tetramer per ATP hydrolyzed, thus driving DNA branch migration. The RuvB motors rotate together with the DNA substrate, which together with the progressing nucleotide cycle form the mechanistic basis for DNA recombination by continuous HJ branch migration. Branch migration allows RuvC to scan DNA until it finds its consensus sequence, where it cleaves and resolves cruciform DNA. In Methylococcus capsulatus (strain ATCC 33009 / NCIMB 11132 / Bath), this protein is Holliday junction branch migration complex subunit RuvB.